The chain runs to 226 residues: EEF1A lysine methyltransferase 3 (226 aa).

S-adenosyl-L-methionine is bound by residues Trp57, 83–85 (GAG), Asp104, Trp133, and Ala150.

This sequence belongs to the methyltransferase superfamily. METTL21 family. In terms of assembly, interacts with members of the heat shock protein 70 and 90 families and of the TCP-1 chaperonin family, as well as with HSPD1, STIP1 and tubulin; at least some of these proteins may be methylation substrates.

It localises to the cytoplasm. It is found in the cytoskeleton. The protein localises to the microtubule organizing center. The protein resides in the centrosome. The enzyme catalyses L-lysyl-[protein] + 3 S-adenosyl-L-methionine = N(6),N(6),N(6)-trimethyl-L-lysyl-[protein] + 3 S-adenosyl-L-homocysteine + 3 H(+). It carries out the reaction L-lysyl-[protein] + S-adenosyl-L-methionine = N(6)-methyl-L-lysyl-[protein] + S-adenosyl-L-homocysteine + H(+). It catalyses the reaction N(6)-methyl-L-lysyl-[protein] + S-adenosyl-L-methionine = N(6),N(6)-dimethyl-L-lysyl-[protein] + S-adenosyl-L-homocysteine + H(+). The catalysed reaction is N(6),N(6)-dimethyl-L-lysyl-[protein] + S-adenosyl-L-methionine = N(6),N(6),N(6)-trimethyl-L-lysyl-[protein] + S-adenosyl-L-homocysteine + H(+). In terms of biological role, protein-lysine methyltransferase that selectively mono-, di- and trimethylates 'Lys-165' of the translation elongation factors EEF1A1 and EEF1A2 in an aminoacyl-tRNA and GTP-dependent manner. EEF1A1 methylation by EEF1AKMT3 is dynamic as well as inducible by stress conditions, such as ER-stress, and plays a regulatory role on mRNA translation. The sequence is that of EEF1A lysine methyltransferase 3 from Homo sapiens (Human).